Consider the following 334-residue polypeptide: Formamidase (334 aa).

The 247-residue stretch at 14 to 260 (FLVAAIQFPV…WEIVTGEIYP (247 aa)) folds into the CN hydrolase domain. Glu60 (proton acceptor) is an active-site residue. The active-site Proton donor is Lys133. Cys166 acts as the Nucleophile in catalysis.

It belongs to the carbon-nitrogen hydrolase superfamily. Aliphatic amidase family.

The enzyme catalyses formamide + H2O = formate + NH4(+). In terms of biological role, is an aliphatic amidase with a restricted substrate specificity, as it only hydrolyzes formamide. In Helicobacter pylori (strain Shi470), this protein is Formamidase.